An 875-amino-acid polypeptide reads, in one-letter code: Leucine--tRNA ligase (875 aa).

The segment covering 1–20 (MPSAGSVNAANPAVDTSAQT) has biased composition (polar residues). The tract at residues 1–22 (MPSAGSVNAANPAVDTSAQTGR) is disordered. Residues 60-70 (PYPSGSLHMGH) carry the 'HIGH' region motif. Residues 634–638 (KMSKS) carry the 'KMSKS' region motif. K637 lines the ATP pocket.

The protein belongs to the class-I aminoacyl-tRNA synthetase family.

The protein resides in the cytoplasm. The catalysed reaction is tRNA(Leu) + L-leucine + ATP = L-leucyl-tRNA(Leu) + AMP + diphosphate. In Synechococcus sp. (strain CC9605), this protein is Leucine--tRNA ligase.